Here is a 464-residue protein sequence, read N- to C-terminus: Asparagine--tRNA ligase (464 aa).

This sequence belongs to the class-II aminoacyl-tRNA synthetase family. In terms of assembly, homodimer.

The protein resides in the cytoplasm. It carries out the reaction tRNA(Asn) + L-asparagine + ATP = L-asparaginyl-tRNA(Asn) + AMP + diphosphate + H(+). This is Asparagine--tRNA ligase from Clostridium beijerinckii (strain ATCC 51743 / NCIMB 8052) (Clostridium acetobutylicum).